The chain runs to 354 residues: MTLLKNDTFLRALLKQPVEYTPIWMMRQAGRYLPEYKATRAKAGSFLDLCKNTELATEVTIQPLERFDLDAAILFSDILTVPDAMGLGLYFAEGEGPKFKRALQHEDDIAKLHVPDMEKLQYVFDAVTSIRKALDGRVPLIGFSGSPFTLACYMVEGGSSKEFRTIKTMMYSRPDLLHKILDTNAQAVTAYLNAQIDAGAQAVQIFDTWGGVLSDAAFKEFSLKYIRQIVAGLKRESEGRRVPVIVFAKGGGLWLESMAQIGADALGLDWTCNIGEARRRVGKQVALQGNFDPFALFGTPESIRTEVARILADYGHGSGHVFNLGHGINQHADPEHAKILVDTVHELSRQYHGG.

Residues 27–31 (RQAGR), Phe-46, Asp-77, Tyr-153, Thr-208, and His-326 contribute to the substrate site.

This sequence belongs to the uroporphyrinogen decarboxylase family. Homodimer.

The protein resides in the cytoplasm. The enzyme catalyses uroporphyrinogen III + 4 H(+) = coproporphyrinogen III + 4 CO2. Its pathway is porphyrin-containing compound metabolism; protoporphyrin-IX biosynthesis; coproporphyrinogen-III from 5-aminolevulinate: step 4/4. Catalyzes the decarboxylation of four acetate groups of uroporphyrinogen-III to yield coproporphyrinogen-III. This is Uroporphyrinogen decarboxylase from Neisseria meningitidis serogroup A / serotype 4A (strain DSM 15465 / Z2491).